The following is a 166-amino-acid chain: MSQFWYSEETASRLAEELLQQAGEHGRIACLSAPSVYQKLKQLESVRSDGVSAVLLEFDRRFAAYGDEFVFYDYNNPLCLPEDLLPQSFDIVIADPPYLSEECLSKVTLTVKHLTKGKILLCTGAIMEEHAGKLLDLKMCSFLPRHNHNLANEFRCYVNYESRLLS.

The protein belongs to the class I-like SAM-binding methyltransferase superfamily. EFM5 family.

It is found in the cytoplasm. The catalysed reaction is L-lysyl-[protein] + 3 S-adenosyl-L-methionine = N(6),N(6),N(6)-trimethyl-L-lysyl-[protein] + 3 S-adenosyl-L-homocysteine + 3 H(+). Its function is as follows. Protein-lysine methyltransferase that selectively catalyzes the trimethylation of EEF1A at 'Lys-79'. The polypeptide is EEF1A lysine methyltransferase 1 (Danio rerio (Zebrafish)).